A 210-amino-acid chain; its full sequence is Lysine N-acyltransferase MbtK (210 aa).

His130 contacts substrate. The active-site Proton acceptor is the Asp168.

This sequence belongs to the lysine N-acyltransferase MbtK family. In terms of assembly, monomer.

It functions in the pathway siderophore biosynthesis; mycobactin biosynthesis. Its function is as follows. Acyltransferase required for the direct transfer of medium- to long-chain fatty acyl moieties from a carrier protein (MbtL) on to the epsilon-amino group of lysine residue in the mycobactin core. The sequence is that of Lysine N-acyltransferase MbtK (mbtK) from Mycobacterium tuberculosis (strain CDC 1551 / Oshkosh).